The sequence spans 536 residues: Transcription factor cheR (536 aa).

Positions 19–57 form a DNA-binding region, zn(2)-C6 fungal-type; the sequence is CDRCHRHKLRCERSSVIVNGGVAVPLGPCKRCLKACIPC. Disordered stretches follow at residues 70-122 and 220-243; these read AKTG…LSGT and ALTD…PREE. The span at 88 to 108 shows a compositional bias: low complexity; the sequence is AASPAKRAPSPARRPTASTPR.

The protein resides in the nucleus. Functionally, transcription factor; part of the gene cluster that mediates the biosynthesis of chaetoglobosin A which has a unique inhibitory activity against actin polymerization in mammalian cells. Chaetoglobosin A and its intermediates are involved in the morphological differentiation of C.globosum. Binds directly to asymmetric direct repeats present in the promoters of the chaetoglobosin A cluster genes. The chain is Transcription factor cheR from Chaetomium globosum (strain ATCC 6205 / CBS 148.51 / DSM 1962 / NBRC 6347 / NRRL 1970) (Soil fungus).